A 28-amino-acid chain; its full sequence is Phospholipase A2 2 (28 aa).

Belongs to the phospholipase A2 family. Group I subfamily. The cofactor is Ca(2+). As to expression, expressed by the venom gland.

Its subcellular location is the secreted. It catalyses the reaction a 1,2-diacyl-sn-glycero-3-phosphocholine + H2O = a 1-acyl-sn-glycero-3-phosphocholine + a fatty acid + H(+). In terms of biological role, snake venom phospholipase A2 (PLA2) that inhibits neuromuscular transmission by blocking acetylcholine release from the nerve termini. PLA2 catalyzes the calcium-dependent hydrolysis of the 2-acyl groups in 3-sn-phosphoglycerides. The protein is Phospholipase A2 2 of Micrurus nigrocinctus (Central American coral snake).